A 480-amino-acid chain; its full sequence is Probable cobyric acid synthase (480 aa).

In terms of domain architecture, GATase cobBQ-type spans 246 to 431 (PVRIAVIRLP…MHGLFLNPSA (186 aa)). The active-site Nucleophile is cysteine 325. Residue histidine 423 is part of the active site.

It belongs to the CobB/CobQ family. CobQ subfamily.

It functions in the pathway cofactor biosynthesis; adenosylcobalamin biosynthesis. Its function is as follows. Catalyzes amidations at positions B, D, E, and G on adenosylcobyrinic A,C-diamide. NH(2) groups are provided by glutamine, and one molecule of ATP is hydrogenolyzed for each amidation. The protein is Probable cobyric acid synthase of Methanoregula boonei (strain DSM 21154 / JCM 14090 / 6A8).